Reading from the N-terminus, the 141-residue chain is MLASCHITSLSGILLLLCVQCSAQILINPCGDVPGVRGPCSANLRRFTFAYGRCVPFYYGGCLGTRNRFDSFVECERRCLGGPCNQTPGVVGRCYAAIPRYTYVPFPINSCVSFTYGGCEGNDNNFEDVNVCFNLCVFRRG.

The N-terminal stretch at methionine 1–alanine 23 is a signal peptide. 2 consecutive BPTI/Kunitz inhibitor domains span residues cysteine 30–cysteine 79 and cysteine 84–cysteine 136. 6 disulfides stabilise this stretch: cysteine 30–cysteine 79, cysteine 40–cysteine 62, cysteine 54–cysteine 75, cysteine 84–cysteine 136, cysteine 94–cysteine 119, and cysteine 111–cysteine 132.

In terms of tissue distribution, prismatic layer of shell (at protein level).

Its subcellular location is the secreted. This chain is BPTI/Kunitz domain-containing protein 2, found in Margaritifera margaritifera (Freshwater pearl mussel).